Here is a 137-residue protein sequence, read N- to C-terminus: Small ribosomal subunit protein bS16m (137 aa).

Residues 1–34 (MVHLTTLLCKAYRGGHLTIRLALGGCTNRPFYRI) constitute a mitochondrion transit peptide. Thr-130 is modified (phosphothreonine).

Belongs to the bacterial ribosomal protein bS16 family. In terms of assembly, component of the mitochondrial small ribosomal subunit (mt-SSU). Mature mammalian 55S mitochondrial ribosomes consist of a small (28S) and a large (39S) subunit. The 28S small subunit contains a 12S ribosomal RNA (12S mt-rRNA) and 30 different proteins. The 39S large subunit contains a 16S rRNA (16S mt-rRNA), a copy of mitochondrial valine transfer RNA (mt-tRNA(Val)), which plays an integral structural role, and 52 different proteins. bS16m has a zinc binding site.

Its subcellular location is the mitochondrion. This chain is Small ribosomal subunit protein bS16m (MRPS16), found in Homo sapiens (Human).